The chain runs to 1327 residues: uncharacterized protein (1327 aa).

884–885 (WD) provides a ligand contact to substrate. Glu1023 acts as the Proton donor in catalysis. Position 1143-1144 (1143-1144 (KQ)) interacts with substrate.

It in the N-terminal section; belongs to the trehalose phosphatase family. The protein in the C-terminal section; belongs to the glycosyl hydrolase 65 family.

This is an uncharacterized protein from Mycobacterium tuberculosis (strain CDC 1551 / Oshkosh).